The chain runs to 318 residues: Porphobilinogen deaminase (318 aa).

Position 241 is an S-(dipyrrolylmethanemethyl)cysteine (cysteine 241).

The protein belongs to the HMBS family. As to quaternary structure, monomer. Dipyrromethane serves as cofactor.

It catalyses the reaction 4 porphobilinogen + H2O = hydroxymethylbilane + 4 NH4(+). Its pathway is porphyrin-containing compound metabolism; protoporphyrin-IX biosynthesis; coproporphyrinogen-III from 5-aminolevulinate: step 2/4. Tetrapolymerization of the monopyrrole PBG into the hydroxymethylbilane pre-uroporphyrinogen in several discrete steps. This is Porphobilinogen deaminase from Citrifermentans bemidjiense (strain ATCC BAA-1014 / DSM 16622 / JCM 12645 / Bem) (Geobacter bemidjiensis).